Consider the following 724-residue polypeptide: Disks large homolog 4 (724 aa).

2 S-palmitoyl cysteine lipidation sites follow: C3 and C5. Positions 15 to 35 (QDEDTPPLEHSPAHLPNQANS) are disordered. PDZ domains are found at residues 65-151 (EITL…VMRR) and 160-246 (EIKL…VAKP). Phosphoserine occurs at positions 73 and 142. Y240 carries the phosphotyrosine modification. A Phosphoserine modification is found at S295. The PDZ 3 domain occupies 313-393 (RIVIHRGSTG…QTVTIIAQYK (81 aa)). Phosphoserine is present on residues S415 and S418. T420 is subject to Phosphothreonine. Phosphoserine occurs at positions 422, 425, 449, and 480. One can recognise an SH3 domain in the interval 428 to 498 (KRGFYIRALF…PSKRRVERRE (71 aa)). Residues 534 to 709 (ARPIIILGPT…IYHKVKRVIE (176 aa)) enclose the Guanylate kinase-like domain. Y580 is modified (phosphotyrosine). Residues S606 and S654 each carry the phosphoserine modification. Y715 is subject to Phosphotyrosine.

Belongs to the MAGUK family. Interacts through its PDZ domains with ANO2 and NETO1. Interacts with KCNJ4. Interacts through its first two PDZ domains with GRIN2A, GRIN2B, GRIN2C and GRIN2D. Interacts with ERBB4. Interacts with KCNA1, KCNA2, KCNA3 and KCNA4. Interacts with LRRC4 and LRRC4B. Interacts with SYNGAP1. Interacts with ASIC3. Interacts with SEMA4C. Interacts with CXADR. Interacts with KCND2. Interacts (via first PDZ domain) with CRIPT. Interacts through its first PDZ domain with GRIK2 and KCNA4. Interacts through its second PDZ domain with the PDZ domain of NOS1 or the C-terminus of CAPON. Interacts through its third PDZ domain with NLGN1 and CRIPT, and probably with NLGN2 and NLGN3. Interacts through its guanylate kinase-like domain with DLGAP1/GKAP, DLGAP2, DLGAP3, DLGAP4, MAP1A, BEGAIN and SIPA1L1. Interacts through its guanylate kinase-like domain with KIF13B. Isoform 2 interacts through an L27 domain with HGS/HRS and the first L27 domain of CASK. Interacts with ANKS1B. Interacts with ADR1B. May interact with HTR2A. Interacts with ADAM22, KLHL17 and LGI1. Interacts with FRMPD4 (via C-terminus). Interacts with LRFN1 and LRFN2. Interacts with LRFN4. Interacts (via N-terminal tandem pair of PDZ domains) with GPER1 (via C-terminus tail motif); the interaction is direct and induces the increase of GPER1 protein levels residing at the plasma membrane surface in a estradiol-independent manner. Interacts (via N-terminus tandem pair of PDZ domains) with NOS1 (via N-terminal domain). Interacts with SHANK3. Interacts with GPR85. Interacts with CACNG2 and MPP2 (via the SH3-Guanylate kinase-like sub-module). Interacts with ADGRB1. Found in a complex with PRR7 and GRIN1. Interacts (via PDZ3 domain and to lesser degree via PDZ2 domain) with PRR7. Component of the postsynaptic hippocampal AMPA-type glutamate receptor (AMPAR) complex, at least composed of pore forming AMPAR subunits GRIA1, GRIA2 and GRIA3 and AMPAR auxiliary proteins SHISA6 and SHISA7. Interacts (via its first two PDZ domains) with SHISA6 and SHISA7 (via PDZ-binding motif); the interaction is direct. Interacts (via PDZ domain 2) with SEMA4F (via PDZ-binding motif); this interaction may promote translocation of DLG4/SAP90 to the membrane. Interacts with RPH3A and GRIN2A; this ternary complex regulates NMDA receptor composition at postsynaptic membranes. Interacts with ABR and BCR. Interacts with DGKI (via PDZ-binding motif); controls the localization of DGKI to the synapse. Interacts with C9orf72, SMCR8 and RAB39B. Interacts with ZDHHC5. Interacts with PTEN (via PDZ domain-binding motif); the interaction is induced by NMDA and is required for PTEN location at postsynaptic density. Found in a complex with GRIA1, GRIA2, GRIA3, GRIA4, CACNG8 and CNIH2. Interacts with FAM81A; the interaction facilitates condensate formation via liquid-liquid phase separation. Interacts with ADGRL3. Interacts with SORCS3. Palmitoylated. Palmitoylation is required for targeting to postsynaptic density, plasma membrane and synapses. Palmitoylation by ZDHHC2 occurs when the synaptic activity decreases and induces DLG4 synaptic clustering. Palmitoylation by ZDHHC15 regulates trafficking to the postsynaptic density and function in synaptogenesis. Palmitoylation may play a role in glutamate receptor GRIA1 synapse clustering. Depalmitoylated by ABHD17A and ABHD17B and to a lesser extent by ABHD17C, ABHD12, ABHD13, LYPLA1 and LYPLA2. Undergoes rapid synaptic palmitoylation/depalmitoylation cycle during neuronal development which slows down in mature neurons. In terms of processing, ubiquitinated by MDM2 in response to NMDA receptor activation, leading to proteasome-mediated degradation of DLG4 which is required for AMPA receptor endocytosis. Expressed in brain (at protein level). Detected in juxtaparanodal zones in the central nervous system and at nerve terminal plexuses of basket cells in the cerebellum. Expressed in cerebrum. Expressed in hippocampal neurons (at protein level). Isoform 1 and isoform 2: highly expressed in cerebellum, cortex, hippocampus, and corpus striatum.

It localises to the cell membrane. It is found in the postsynaptic density. The protein resides in the synapse. The protein localises to the cytoplasm. Its subcellular location is the cell projection. It localises to the axon. It is found in the dendritic spine. The protein resides in the dendrite. The protein localises to the presynapse. Postsynaptic scaffolding protein that plays a critical role in synaptogenesis and synaptic plasticity by providing a platform for the postsynaptic clustering of crucial synaptic proteins. Interacts with the cytoplasmic tail of NMDA receptor subunits and shaker-type potassium channels. Required for synaptic plasticity associated with NMDA receptor signaling. Overexpression or depletion of DLG4 changes the ratio of excitatory to inhibitory synapses in hippocampal neurons. May reduce the amplitude of ASIC3 acid-evoked currents by retaining the channel intracellularly. May regulate the intracellular trafficking of ADR1B. Also regulates AMPA-type glutamate receptor (AMPAR) immobilization at postsynaptic density keeping the channels in an activated state in the presence of glutamate and preventing synaptic depression. Under basal conditions, cooperates with FYN to stabilize palmitoyltransferase ZDHHC5 at the synaptic membrane through FYN-mediated phosphorylation of ZDHHC5 and its subsequent inhibition of association with endocytic proteins. In Rattus norvegicus (Rat), this protein is Disks large homolog 4.